A 471-amino-acid polypeptide reads, in one-letter code: Ubiquitin-conjugating enzyme E2 variant 3 (471 aa).

The UEV domain maps to 2 to 145; the sequence is DVNSEPVKKV…EEEPPLGTKS (144 aa). 183–211 is an NAD(+) binding site; the sequence is GDLGIAAVLSIMAKSCVDKLVLIDIPENS.

This sequence in the N-terminal section; belongs to the ubiquitin-conjugating enzyme family. UEV subfamily. In the C-terminal section; belongs to the LDH/MDH superfamily. In terms of assembly, homodimer.

Its function is as follows. Possible negative regulator of polyubiquitination. The chain is Ubiquitin-conjugating enzyme E2 variant 3 (uevld) from Danio rerio (Zebrafish).